The sequence spans 550 residues: U-box domain-containing protein 40 (550 aa).

The span at 19–29 (KSDNLSRRESL) shows a compositional bias: basic and acidic residues. The tract at residues 19–55 (KSDNLSRRESLAGKSKWRTSLSRSSSSSSSNNNSPTK) is disordered. The span at 38-52 (SLSRSSSSSSSNNNS) shows a compositional bias: low complexity. In terms of domain architecture, U-box spans 57 to 127 (EIPAEFLCPI…HSWCERRCFP (71 aa)). 5 ARM repeats span residues 260–299 (ESSR…NLSL), 301–340 (KSNK…SLAL), 342–381 (DENK…HLSL), 383–420 (QSNR…NMAS), and 422–464 (PVSR…GLSH).

It catalyses the reaction S-ubiquitinyl-[E2 ubiquitin-conjugating enzyme]-L-cysteine + [acceptor protein]-L-lysine = [E2 ubiquitin-conjugating enzyme]-L-cysteine + N(6)-ubiquitinyl-[acceptor protein]-L-lysine.. The protein operates within protein modification; protein ubiquitination. Functionally, functions as an E3 ubiquitin ligase. In Arabidopsis thaliana (Mouse-ear cress), this protein is U-box domain-containing protein 40 (PUB40).